Here is a 197-residue protein sequence, read N- to C-terminus: Phosphoheptose isomerase (197 aa).

The SIS domain occupies 34–196; that stretch reads MVHCLLSGNK…DHTLFPQDEQ (163 aa). 49–51 is a binding site for substrate; sequence NGG. 2 residues coordinate Zn(2+): His-58 and Glu-62. Residues Glu-62, 91 to 92, 117 to 119, Ser-122, and Gln-172 each bind substrate; these read ND and STS. Positions 172 and 180 each coordinate Zn(2+).

Belongs to the SIS family. GmhA subfamily. As to quaternary structure, homotetramer. It depends on Zn(2+) as a cofactor.

The protein localises to the cytoplasm. It carries out the reaction 2 D-sedoheptulose 7-phosphate = D-glycero-alpha-D-manno-heptose 7-phosphate + D-glycero-beta-D-manno-heptose 7-phosphate. Its pathway is carbohydrate biosynthesis; D-glycero-D-manno-heptose 7-phosphate biosynthesis; D-glycero-alpha-D-manno-heptose 7-phosphate and D-glycero-beta-D-manno-heptose 7-phosphate from sedoheptulose 7-phosphate: step 1/1. In terms of biological role, catalyzes the isomerization of sedoheptulose 7-phosphate in D-glycero-D-manno-heptose 7-phosphate. The polypeptide is Phosphoheptose isomerase (Shewanella halifaxensis (strain HAW-EB4)).